We begin with the raw amino-acid sequence, 282 residues long: Lipoyl synthase (282 aa).

[4Fe-4S] cluster is bound by residues Cys37, Cys42, Cys48, Cys63, Cys67, Cys70, and Ser275. In terms of domain architecture, Radical SAM core spans 49–264 (WSRGTATFMI…RLVGIEKGFR (216 aa)).

It belongs to the radical SAM superfamily. Lipoyl synthase family. The cofactor is [4Fe-4S] cluster.

It is found in the cytoplasm. The enzyme catalyses [[Fe-S] cluster scaffold protein carrying a second [4Fe-4S](2+) cluster] + N(6)-octanoyl-L-lysyl-[protein] + 2 oxidized [2Fe-2S]-[ferredoxin] + 2 S-adenosyl-L-methionine + 4 H(+) = [[Fe-S] cluster scaffold protein] + N(6)-[(R)-dihydrolipoyl]-L-lysyl-[protein] + 4 Fe(3+) + 2 hydrogen sulfide + 2 5'-deoxyadenosine + 2 L-methionine + 2 reduced [2Fe-2S]-[ferredoxin]. It participates in protein modification; protein lipoylation via endogenous pathway; protein N(6)-(lipoyl)lysine from octanoyl-[acyl-carrier-protein]: step 2/2. In terms of biological role, catalyzes the radical-mediated insertion of two sulfur atoms into the C-6 and C-8 positions of the octanoyl moiety bound to the lipoyl domains of lipoate-dependent enzymes, thereby converting the octanoylated domains into lipoylated derivatives. The chain is Lipoyl synthase from Porphyromonas gingivalis (strain ATCC BAA-308 / W83).